A 202-amino-acid polypeptide reads, in one-letter code: MSTFFEPENGMKQNAKTERILDVALELLETEGEFGLTMRQVATQADMSLSNVQYYFKSEDLLLVAMADRYFQRCLTTMAEHPPLSAGRDQHAQLRALLRELLGHGLEISEMCRIFREYWAIATRNETVHGYLKSYYRDLAEVMAEKLAPLASSEKALAVAVSLVIPYVEGYSVTAIAMPESIDTISETLTNVVLEQLRISNS.

Residues 14–74 enclose the HTH tetR-type domain; that stretch reads NAKTERILDV…AMADRYFQRC (61 aa).

This is an uncharacterized protein from Xanthobacter autotrophicus.